The primary structure comprises 96 residues: Prokineticin Bv8 (96 aa).

Positions 1-19 are cleaved as a signal peptide; sequence MKCFAQIVVLLLVIAFSHG. The may be important for binding to prokineticin receptor 2 stretch occupies residues 20 to 24; it reads AVITG. Disulfide bonds link Cys-26/Cys-38, Cys-32/Cys-50, Cys-37/Cys-78, Cys-60/Cys-86, and Cys-80/Cys-95.

As to expression, expressed by the skin glands.

The protein localises to the secreted. In terms of biological role, potent agonist for both PKR1/PROKR1 and PKR2/PROKR2, and inducer of a potent and long-lasting hyperalgesia. Shows an EC(50) of 0.264 nM, when tested on neuroblastoma cells (SH-SY5Y) which endogenously express mainly PKR2/PROKR2. Also potentiates capsaicin-induced TRPV1 current, when tested on DRG neurons. Induces a biphasic hyperalgesia to tactile and thermal stimuli after systemic injection of this protein into rat. The initial phase of hyperalgesia is caused by a local action on nociceptors, because intraplantar injection of this protein causes a strong and localized hyperalgesia with a similar time course to that of the initial phase of hyperalgesia seen with systemic injection. The secondary phase of hyperalgesia is not seen with local intraplantar injection and is therefore probably attributable to a central action of this protein. At subnanomolar concentrations, this protein both induces potent chemotaxis of macrophages and stimulates LPS-induced production of the pro-inflammatory cytokines IL-1 and IL-12. In vivo, this protein potently stimulates the contraction of the guinea-pig gastrointestinal (GI) smooth muscle (at nanomolar concentration). The polypeptide is Prokineticin Bv8 (Bombina variegata (Yellow-bellied toad)).